The sequence spans 298 residues: 3-hydroxyisobutyrate dehydrogenase (298 aa).

Residues 2 to 30, 65 to 66, and Thr96 each bind NAD(+); these read TDIAFLGLGNMGGPMAANLLKAGHRVNVF and LP. The active site involves Lys171. NAD(+) is bound at residue Lys246.

The protein belongs to the HIBADH-related family.

The enzyme catalyses 3-hydroxy-2-methylpropanoate + NAD(+) = 2-methyl-3-oxopropanoate + NADH + H(+). It functions in the pathway amino-acid degradation; L-valine degradation. The chain is 3-hydroxyisobutyrate dehydrogenase from Pseudomonas aeruginosa (strain ATCC 15692 / DSM 22644 / CIP 104116 / JCM 14847 / LMG 12228 / 1C / PRS 101 / PAO1).